The following is an 846-amino-acid chain: Rho GTPase-activating protein 17 (846 aa).

The BAR domain occupies 14-246; sequence QTVGRAEKTE…MRAHQDKWAE (233 aa). In terms of domain architecture, Rho-GAP spans 252–442; the sequence is TPLEEHLKRS…PIIQHADWFF (191 aa). Over residues 459-475 the composition is skewed to polar residues; it reads TPNSNHSSHTGNDSDSG. The disordered stretch occupies residues 459 to 482; that stretch reads TPNSNHSSHTGNDSDSGTLERKRP. Residues Ser484 and Ser575 each carry the phosphoserine modification. Residues 519–807 form a disordered region; that stretch reads IAPAFQPPLP…ASRIVTDTNS (289 aa). Over residues 592–619 the composition is skewed to polar residues; that stretch reads RNSNQMTTVPNQAQTGGNSHQLSVSTPH. Residues 637–650 show a composition bias toward pro residues; it reads APAPPKPGNLPPGH. The segment covering 653–690 has biased composition (low complexity); that stretch reads GQSSPGTGTSPKPSARSPSPPQQQQQQQQQQQQQQQQQ. 2 positions are modified to phosphoserine: Ser698 and Ser700. 2 stretches are compositionally biased toward pro residues: residues 704–717 and 726–741; these read IQAP…PPTQ and EPGP…PSTP. Phosphothreonine occurs at positions 730, 734, and 736. Positions 730–743 match the SH3-binding motif; the sequence is TPPQTPTPPSTPPL. Ser739 is modified (phosphoserine). Thr740 carries the post-translational modification Phosphothreonine. Positions 746 to 757 are enriched in polar residues; it reads QNPSQSETTQLH. A compositionally biased stretch (pro residues) spans 772–782; the sequence is RPSVPPPPHPP. Over residues 791–807 the composition is skewed to polar residues; it reads LTSSVPTASRIVTDTNS.

Component of a complex whose core is composed of ARHGAP17, AMOT, PALS1, PATJ and PARD3/PAR3. Interacts with NHERF1, FNBP1, TRIP10, CAPZA (CAPZA1, CAPZA2 or CAPZA3), CAPZB, CD2AP and SH3KBP1/CIN85.

The protein localises to the membrane. Its subcellular location is the cytoplasm. It is found in the cell junction. It localises to the tight junction. Its function is as follows. Rho GTPase-activating protein involved in the maintenance of tight junction by regulating the activity of CDC42, thereby playing a central role in apical polarity of epithelial cells. Specifically acts as a GTPase activator for the CDC42 GTPase by converting it to an inactive GDP-bound state. The complex formed with AMOT acts by regulating the uptake of polarity proteins at tight junctions, possibly by deciding whether tight junction transmembrane proteins are recycled back to the plasma membrane or sent elsewhere. Participates in the Ca(2+)-dependent regulation of exocytosis, possibly by catalyzing GTPase activity of Rho family proteins and by inducing the reorganization of the cortical actin filaments. Acts as a GTPase activator in vitro for RAC1. This Mus musculus (Mouse) protein is Rho GTPase-activating protein 17 (Arhgap17).